The sequence spans 438 residues: Acid phosphatase type 7 (438 aa).

The first 26 residues, 1 to 26, serve as a signal peptide directing secretion; it reads MHPLPGYWSCYCLLLLFSLGVQGSLG. The Fe cation site is built by Asp141, Asp170, and Tyr173. Asp170 provides a ligand contact to Zn(2+). Asn205 is a binding site for Zn(2+). N-linked (GlcNAc...) asparagine glycosylation occurs at Asn211. Zn(2+) is bound by residues His286 and His333. Position 335 (His335) interacts with Fe cation. N-linked (GlcNAc...) asparagine glycans are attached at residues Asn350 and Asn404.

Belongs to the metallophosphoesterase superfamily. Purple acid phosphatase family. Requires Fe cation as cofactor. Zn(2+) is required as a cofactor.

It is found in the secreted. The enzyme catalyses a phosphate monoester + H2O = an alcohol + phosphate. The chain is Acid phosphatase type 7 from Homo sapiens (Human).